Consider the following 448-residue polypeptide: Asparagine--tRNA ligase (448 aa).

The protein belongs to the class-II aminoacyl-tRNA synthetase family. Homodimer.

The protein localises to the cytoplasm. It carries out the reaction tRNA(Asn) + L-asparagine + ATP = L-asparaginyl-tRNA(Asn) + AMP + diphosphate + H(+). This Streptococcus sanguinis (strain SK36) protein is Asparagine--tRNA ligase.